A 390-amino-acid polypeptide reads, in one-letter code: GTPase Obg (390 aa).

The 159-residue stretch at Met1–Leu159 folds into the Obg domain. The tract at residues Asn127–Gly147 is disordered. Polar residues predominate over residues Arg129–Met143. Residues Ala160–Ile333 enclose the OBG-type G domain. GTP is bound by residues Gly166–Ser173, Phe191–Val195, Asp213–Gly216, Asn283–Asp286, and Ser314–Ala316. Ser173 and Thr193 together coordinate Mg(2+).

It belongs to the TRAFAC class OBG-HflX-like GTPase superfamily. OBG GTPase family. As to quaternary structure, monomer. It depends on Mg(2+) as a cofactor.

Its subcellular location is the cytoplasm. An essential GTPase which binds GTP, GDP and possibly (p)ppGpp with moderate affinity, with high nucleotide exchange rates and a fairly low GTP hydrolysis rate. Plays a role in control of the cell cycle, stress response, ribosome biogenesis and in those bacteria that undergo differentiation, in morphogenesis control. The sequence is that of GTPase Obg from Citrobacter koseri (strain ATCC BAA-895 / CDC 4225-83 / SGSC4696).